Reading from the N-terminus, the 323-residue chain is Prenyl transferase (323 aa).

The isopentenyl diphosphate site is built by lysine 46, arginine 49, and histidine 81. Residues aspartate 88 and aspartate 92 each contribute to the Mg(2+) site. An all-trans-polyprenyl diphosphate is bound at residue arginine 97. An isopentenyl diphosphate-binding site is contributed by arginine 98. Residues lysine 174, threonine 175, and glutamine 212 each coordinate an all-trans-polyprenyl diphosphate.

The protein belongs to the FPP/GGPP synthase family. Mg(2+) is required as a cofactor.

The protein resides in the plastid. The protein localises to the chloroplast. Its function is as follows. Possible role in synthesis of the nonaprenyl side chain of plastoquinone or in synthesis of other prenyl chains such as undekaprenyl pyrophosphate. The polypeptide is Prenyl transferase (preA) (Porphyra purpurea (Red seaweed)).